Here is a 296-residue protein sequence, read N- to C-terminus: Nitrogenase iron protein 1 (296 aa).

Position 11–18 (11–18 (GKGGIGKS)) interacts with ATP. Position 99 (Cys-99) interacts with [4Fe-4S] cluster. Residue Arg-102 is modified to ADP-ribosylarginine; by dinitrogenase reductase ADP-ribosyltransferase. Cys-133 serves as a coordination point for [4Fe-4S] cluster.

This sequence belongs to the NifH/BchL/ChlL family. In terms of assembly, homodimer. Requires [4Fe-4S] cluster as cofactor. The reversible ADP-ribosylation of Arg-102 inactivates the nitrogenase reductase and regulates nitrogenase activity.

It carries out the reaction N2 + 8 reduced [2Fe-2S]-[ferredoxin] + 16 ATP + 16 H2O = H2 + 8 oxidized [2Fe-2S]-[ferredoxin] + 2 NH4(+) + 16 ADP + 16 phosphate + 6 H(+). In terms of biological role, the key enzymatic reactions in nitrogen fixation are catalyzed by the nitrogenase complex, which has 2 components: the iron protein and the molybdenum-iron protein. This is Nitrogenase iron protein 1 (nifH1) from Azorhizobium caulinodans (strain ATCC 43989 / DSM 5975 / JCM 20966 / LMG 6465 / NBRC 14845 / NCIMB 13405 / ORS 571).